Reading from the N-terminus, the 178-residue chain is Large ribosomal subunit protein uL10 (178 aa).

The protein belongs to the universal ribosomal protein uL10 family. Part of the ribosomal stalk of the 50S ribosomal subunit. The N-terminus interacts with L11 and the large rRNA to form the base of the stalk. The C-terminus forms an elongated spine to which L12 dimers bind in a sequential fashion forming a multimeric L10(L12)X complex.

Its function is as follows. Forms part of the ribosomal stalk, playing a central role in the interaction of the ribosome with GTP-bound translation factors. The polypeptide is Large ribosomal subunit protein uL10 (Gloeothece citriformis (strain PCC 7424) (Cyanothece sp. (strain PCC 7424))).